Here is a 91-residue protein sequence, read N- to C-terminus: Large ribosomal subunit protein bL28 (91 aa).

This sequence belongs to the bacterial ribosomal protein bL28 family.

The polypeptide is Large ribosomal subunit protein bL28 (Protochlamydia amoebophila (strain UWE25)).